A 244-amino-acid chain; its full sequence is MDQFSGGGGNWSMIPNVQAQGNFGTPTNHDQQLFLQQQQLQQQQQQQQQQQFHLQQQQQTQQQQQQFQPQQQQEMQQYQQFQQQQHFIQQQQFQQQQRLLQSPPLQPQSLQSPPPQQTMVHTPQSMMHTPQQQQQLVQTPVQTPQQHQSLASHFHLYPMVEKLADVIENGTRDQNSDALVNELNSHFDKCQQLLNSISGSLGSKTMTVDGQKRNVEESEQLLQQRRDLIVEYRKSIEEIVTMEH.

Residues 1-10 (MDQFSGGGGN) show a composition bias toward gly residues. 2 disordered regions span residues 1-28 (MDQFSGGGGNWSMIPNVQAQGNFGTPTN) and 96-131 (QQRLLQSPPLQPQSLQSPPPQQTMVHTPQSMMHTPQ). A compositionally biased stretch (polar residues) spans 13-28 (MIPNVQAQGNFGTPTN). Composition is skewed to low complexity over residues 96-111 (QQRLLQSPPLQPQSLQ) and 122-131 (TPQSMMHTPQ). The stretch at 212–239 (KRNVEESEQLLQQRRDLIVEYRKSIEEI) forms a coiled coil.

Belongs to the plant Mediator complex subunit 9 family. Component of the Mediator complex. Interacts with MEE14/CBP1.

It localises to the nucleus. In terms of biological role, component of the Mediator complex, a coactivator involved in the regulated transcription of nearly all RNA polymerase II-dependent genes. Mediator functions as a bridge to convey information from gene-specific regulatory proteins to the basal RNA polymerase II transcription machinery. The Mediator complex, having a compact conformation in its free form, is recruited to promoters by direct interactions with regulatory proteins and serves for the assembly of a functional pre-initiation complex with RNA polymerase II and the general transcription factors. This Arabidopsis thaliana (Mouse-ear cress) protein is Mediator of RNA polymerase II transcription subunit 9 (MED9).